The chain runs to 122 residues: Aspartate 1-decarboxylase (122 aa).

The Schiff-base intermediate with substrate; via pyruvic acid role is filled by Ser25. At Ser25 the chain carries Pyruvic acid (Ser). A substrate-binding site is contributed by Thr57. Tyr58 (proton donor) is an active-site residue. 73–75 is a binding site for substrate; that stretch reads GAA.

It belongs to the PanD family. In terms of assembly, heterooctamer of four alpha and four beta subunits. It depends on pyruvate as a cofactor. Post-translationally, is synthesized initially as an inactive proenzyme, which is activated by self-cleavage at a specific serine bond to produce a beta-subunit with a hydroxyl group at its C-terminus and an alpha-subunit with a pyruvoyl group at its N-terminus.

It localises to the cytoplasm. It carries out the reaction L-aspartate + H(+) = beta-alanine + CO2. Its pathway is cofactor biosynthesis; (R)-pantothenate biosynthesis; beta-alanine from L-aspartate: step 1/1. Its function is as follows. Catalyzes the pyruvoyl-dependent decarboxylation of aspartate to produce beta-alanine. The sequence is that of Aspartate 1-decarboxylase from Bordetella avium (strain 197N).